A 696-amino-acid polypeptide reads, in one-letter code: Probable transporter efuK (696 aa).

The tract at residues serine 603–phenylalanine 642 is disordered. Residues alanine 615–asparagine 633 are compositionally biased toward basic and acidic residues.

The protein belongs to the OSBP family.

In terms of biological role, probable transporter; part of the gene cluster that mediates the biosynthesis of enfumafungin, a glycosylated fernene-type triterpenoid with potent antifungal activity, mediated by its interaction with beta-1,3-glucan synthase and the fungal cell wall. Might be involved in transport of enfumafungin to and across organelle membranes. The protein is Probable transporter efuK of Hormonema carpetanum.